The sequence spans 574 residues: Lysyl oxidase homolog 1 (574 aa).

The first 25 residues, 1-25 (MALARGSRQLGALVWGACLCVLVHG), serve as a signal peptide directing secretion. The propeptide occupies 26-95 (QQAQPGQGSD…RRSHGSPRRR (70 aa)). Disordered regions lie at residues 62-123 (VPAG…GFGQ) and 239-374 (GGEE…DLVP). Basic residues predominate over residues 86–96 (RRSHGSPRRRQ). 2 stretches are compositionally biased toward pro residues: residues 255 to 268 (PERP…PPPD) and 313 to 332 (YANP…PPYL). The interaction with FBLN5 stretch occupies residues 311–369 (PPYANPPPEAYGPPRALEPPYLPVRSSDTPPPGGERNGAQQGRLSVGSVYRPNQNGRGL). The segment at 370 to 574 (PDLVPDPNYV…SATNCKIVQS (205 aa)) is lysyl-oxidase like. 5 cysteine pairs are disulfide-bonded: Cys-395–Cys-401, Cys-448–Cys-497, Cys-481–Cys-487, Cys-508–Cys-518, and Cys-555–Cys-569. Cu cation is bound by residues His-449, His-451, and His-453. Positions 477-512 (KASFCLEDSTCDFGNLKRYACTSHTQGLSPGCYDTY) form a cross-link, lysine tyrosylquinone (Lys-Tyr); alternate. A 2',4',5'-topaquinone; alternate modification is found at Tyr-512.

This sequence belongs to the lysyl oxidase family. Interacts (via propeptide) with EFEMP2. Interacts with FBLN5. The cofactor is Cu cation. It depends on lysine tyrosylquinone residue as a cofactor. In terms of processing, the lysine tyrosylquinone cross-link (LTQ) is generated by condensation of the epsilon-amino group of a lysine with a topaquinone produced by oxidation of tyrosine. Post-translationally, proteolytic processing by a furin-like protease causes removal of N-terminal propeptide resulting in an enzyme largely inactive, but further proteolytic processing by BMP1 results in enzyme activation. As to expression, expressed in ocular tissues including the iris, ciliary body, lens and optic nerve. Not detected in the retina.

It is found in the secreted. It localises to the extracellular space. The protein resides in the extracellular matrix. The catalysed reaction is L-lysyl-[protein] + O2 + H2O = (S)-2-amino-6-oxohexanoyl-[protein] + H2O2 + NH4(+). In terms of biological role, catalyzes the oxidative deamination of lysine and hydroxylysine residues in collagen and elastin, resulting in the formation of covalent cross-linkages, and the stabilization of collagen and elastin fibers. Essential for the elastic fiber homeostasis and for their maintenance at adult age. The chain is Lysyl oxidase homolog 1 (LOXL1) from Homo sapiens (Human).